Reading from the N-terminus, the 342-residue chain is Endo-1,4-beta-xylanase A (342 aa).

The region spanning 11 to 342 (EMLNLSLAKT…KEALYRILRF (332 aa)) is the GH10 domain. Catalysis depends on Glu-144, which acts as the Proton donor. The active-site Nucleophile is Glu-252.

The protein belongs to the glycosyl hydrolase 10 (cellulase F) family. Cytoplasmic xylanase subfamily.

It is found in the cytoplasm. The catalysed reaction is Endohydrolysis of (1-&gt;4)-beta-D-xylosidic linkages in xylans.. It participates in glycan degradation; xylan degradation. This Caldicellulosiruptor saccharolyticus (Caldocellum saccharolyticum) protein is Endo-1,4-beta-xylanase A (xynA).